Here is a 241-residue protein sequence, read N- to C-terminus: Pyridoxine 5'-phosphate synthase (241 aa).

A 3-amino-2-oxopropyl phosphate-binding site is contributed by Asn7. Residue Asp9 to His10 participates in 1-deoxy-D-xylulose 5-phosphate binding. 3-amino-2-oxopropyl phosphate is bound at residue Arg18. The Proton acceptor role is filled by His43. 1-deoxy-D-xylulose 5-phosphate-binding residues include Arg45 and His50. Residue Glu70 is the Proton acceptor of the active site. Thr100 lines the 1-deoxy-D-xylulose 5-phosphate pocket. Residue His191 is the Proton donor of the active site. 3-amino-2-oxopropyl phosphate contacts are provided by residues Gly192 and Gly213–His214.

This sequence belongs to the PNP synthase family. Homooctamer; tetramer of dimers.

The protein localises to the cytoplasm. The enzyme catalyses 3-amino-2-oxopropyl phosphate + 1-deoxy-D-xylulose 5-phosphate = pyridoxine 5'-phosphate + phosphate + 2 H2O + H(+). It participates in cofactor biosynthesis; pyridoxine 5'-phosphate biosynthesis; pyridoxine 5'-phosphate from D-erythrose 4-phosphate: step 5/5. Functionally, catalyzes the complicated ring closure reaction between the two acyclic compounds 1-deoxy-D-xylulose-5-phosphate (DXP) and 3-amino-2-oxopropyl phosphate (1-amino-acetone-3-phosphate or AAP) to form pyridoxine 5'-phosphate (PNP) and inorganic phosphate. This is Pyridoxine 5'-phosphate synthase from Solidesulfovibrio magneticus (strain ATCC 700980 / DSM 13731 / RS-1) (Desulfovibrio magneticus).